The following is a 154-amino-acid chain: Myoglobin (154 aa).

The Globin domain occupies 2–148 (GLSDGEWQLV…FRNDMAAKYK (147 aa)). Serine 4 bears the Phosphoserine mark. Histidine 65 contributes to the nitrite binding site. Residue histidine 65 participates in O2 binding. Threonine 68 is subject to Phosphothreonine. Histidine 94 contributes to the heme b binding site.

This sequence belongs to the globin family. In terms of assembly, monomeric.

The protein resides in the cytoplasm. It localises to the sarcoplasm. It carries out the reaction Fe(III)-heme b-[protein] + nitric oxide + H2O = Fe(II)-heme b-[protein] + nitrite + 2 H(+). It catalyses the reaction H2O2 + AH2 = A + 2 H2O. Its function is as follows. Monomeric heme protein which primary function is to store oxygen and facilitate its diffusion within muscle tissues. Reversibly binds oxygen through a pentacoordinated heme iron and enables its timely and efficient release as needed during periods of heightened demand. Depending on the oxidative conditions of tissues and cells, and in addition to its ability to bind oxygen, it also has a nitrite reductase activity whereby it regulates the production of bioactive nitric oxide. Under stress conditions, like hypoxia and anoxia, it also protects cells against reactive oxygen species thanks to its pseudoperoxidase activity. The polypeptide is Myoglobin (MB) (Didelphis virginiana (North American opossum)).